The sequence spans 452 residues: Probable intron-encoded endonuclease 2 (452 aa).

The next 3 helical transmembrane spans lie at 1–21 (MNIT…NRKN), 22–42 (IILM…LILV), and 57–77 (IYII…LVAF). Residues 1–80 (MNITLILFLI…LAILVAFYRL (80 aa)) are ndh-4L exon 1 encoded. A ndh-4L intron 1 encoded region spans residues 81 to 452 (INSPVKNPRS…SLEGGMNKNI (372 aa)).

This sequence in the N-terminal section; belongs to the complex I subunit 4L family. It in the C-terminal section; belongs to the LAGLIDADG endonuclease family.

It is found in the mitochondrion membrane. Mitochondrial DNA endonuclease involved in intron homing. The protein is Probable intron-encoded endonuclease 2 of Neurospora crassa (strain ATCC 24698 / 74-OR23-1A / CBS 708.71 / DSM 1257 / FGSC 987).